Reading from the N-terminus, the 520-residue chain is 4-hydroxyphenylacetate 3-monooxygenase oxygenase component (520 aa).

Belongs to the FADH(2)-utilizing monooxygenase family. In terms of assembly, 4-HPA 3-monooxygenase consists of a reductase component HpaC and an oxygenase component HpaB.

It carries out the reaction 4-hydroxyphenylacetate + FADH2 + O2 = 3,4-dihydroxyphenylacetate + FAD + H2O + H(+). It participates in aromatic compound metabolism; 4-hydroxyphenylacetate degradation; pyruvate and succinate semialdehyde from 4-hydroxyphenylacetate: step 1/7. Its function is as follows. Utilizes FADH(2) supplied by HpaC or by another flavin reductase, to catalyze the hydroxylation of 4-hydroxyphenylacetic acid, leading to the production of 3,4-DHPA. In Klebsiella oxytoca, this protein is 4-hydroxyphenylacetate 3-monooxygenase oxygenase component (hpaB).